Consider the following 69-residue polypeptide: Putative membrane protein insertion efficiency factor (69 aa).

This sequence belongs to the UPF0161 family.

The protein resides in the cell inner membrane. Functionally, could be involved in insertion of integral membrane proteins into the membrane. This chain is Putative membrane protein insertion efficiency factor, found in Dechloromonas aromatica (strain RCB).